The following is a 150-amino-acid chain: Small ribosomal subunit protein eS19 (150 aa).

Belongs to the eukaryotic ribosomal protein eS19 family. As to quaternary structure, part of the 30S ribosomal subunit.

Its function is as follows. May be involved in maturation of the 30S ribosomal subunit. In Pyrococcus horikoshii (strain ATCC 700860 / DSM 12428 / JCM 9974 / NBRC 100139 / OT-3), this protein is Small ribosomal subunit protein eS19.